We begin with the raw amino-acid sequence, 431 residues long: MLDIQLLRSNTAAVAERLARRGYDFDTARFDALEERRKSVQVKTEELQASRNSISKQIGALKGQGKHEEAQVAMDQVAQIKTDLEQAAADLDAVQKELDAWLLSIPNLPHEDVPFGKDETENVEVRKVGTPREFDFEIKDHVDLGEPLGLDFEGGAKLSGARFTVMRGQIARLHRALAQFMLDTHTLKHGYTEHYTPYIVDDTTLQGTGQLPKFAEDLFHVTRGGDESKTTQYLIPTAEVTLTNTVAGSIIPSEQLPLKLTAHSPCFRSEAGSYGKDTRGLIRQHQFDKVEMVQIVHPEKSYETLEEMVGHAENILKALELPYRVITLCTGDMGFGATKTYDLEVWVPAQNTYREISSCSNCEDFQARRMKARFKDENGKNRLVHTLNGSGLAVGRTLVAVLENHQNADGSINIPAALQPYMGGVAKLEVK.

237–239 is an L-serine binding site; that stretch reads TAE. 268–270 lines the ATP pocket; that stretch reads RSE. E291 is an L-serine binding site. Position 355–358 (355–358) interacts with ATP; it reads EISS. S390 is a binding site for L-serine.

Belongs to the class-II aminoacyl-tRNA synthetase family. Type-1 seryl-tRNA synthetase subfamily. As to quaternary structure, homodimer. The tRNA molecule binds across the dimer.

Its subcellular location is the cytoplasm. The catalysed reaction is tRNA(Ser) + L-serine + ATP = L-seryl-tRNA(Ser) + AMP + diphosphate + H(+). The enzyme catalyses tRNA(Sec) + L-serine + ATP = L-seryl-tRNA(Sec) + AMP + diphosphate + H(+). It participates in aminoacyl-tRNA biosynthesis; selenocysteinyl-tRNA(Sec) biosynthesis; L-seryl-tRNA(Sec) from L-serine and tRNA(Sec): step 1/1. Catalyzes the attachment of serine to tRNA(Ser). Is also able to aminoacylate tRNA(Sec) with serine, to form the misacylated tRNA L-seryl-tRNA(Sec), which will be further converted into selenocysteinyl-tRNA(Sec). The polypeptide is Serine--tRNA ligase (Neisseria meningitidis serogroup A / serotype 4A (strain DSM 15465 / Z2491)).